Here is a 130-residue protein sequence, read N- to C-terminus: Small ribosomal subunit protein uS9 (130 aa).

Belongs to the universal ribosomal protein uS9 family.

The polypeptide is Small ribosomal subunit protein uS9 (Vibrio atlanticus (strain LGP32) (Vibrio splendidus (strain Mel32))).